A 549-amino-acid polypeptide reads, in one-letter code: Glucose-6-phosphate isomerase (549 aa).

Residue Glu355 is the Proton donor of the active site. Catalysis depends on residues His386 and Lys514.

Belongs to the GPI family.

The protein resides in the cytoplasm. The enzyme catalyses alpha-D-glucose 6-phosphate = beta-D-fructose 6-phosphate. Its pathway is carbohydrate biosynthesis; gluconeogenesis. The protein operates within carbohydrate degradation; glycolysis; D-glyceraldehyde 3-phosphate and glycerone phosphate from D-glucose: step 2/4. In terms of biological role, catalyzes the reversible isomerization of glucose-6-phosphate to fructose-6-phosphate. This is Glucose-6-phosphate isomerase from Buchnera aphidicola subsp. Acyrthosiphon pisum (strain 5A).